Reading from the N-terminus, the 272-residue chain is Undecaprenyl-diphosphatase (272 aa).

A run of 7 helical transmembrane segments spans residues 42-62 (FGLS…VVFF), 92-112 (YLVL…EDFF), 120-140 (WVVV…EAVG), 149-169 (MGFA…VPGV), 194-214 (FLMS…EVLA), 224-244 (MFAV…RFFI), and 252-272 (LRAF…LLLL).

The protein belongs to the UppP family.

Its subcellular location is the cell membrane. The catalysed reaction is di-trans,octa-cis-undecaprenyl diphosphate + H2O = di-trans,octa-cis-undecaprenyl phosphate + phosphate + H(+). In terms of biological role, catalyzes the dephosphorylation of undecaprenyl diphosphate (UPP). Confers resistance to bacitracin. In Rubrobacter xylanophilus (strain DSM 9941 / JCM 11954 / NBRC 16129 / PRD-1), this protein is Undecaprenyl-diphosphatase.